The following is a 524-amino-acid chain: Keratin, type II cytoskeletal 72 (524 aa).

The segment at 1–136 (MSRQLNLYPG…DPEIQKVRAQ (136 aa)) is head. The tract at residues 137–172 (EREQIKALNNKFASFIDKVRFLEQQNQVLGTKWELL) is coil 1A. Residues 137-450 (EREQIKALNN…KLLEGEECRM (314 aa)) form the IF rod domain. The interval 173-191 (QQLDLNNCKNNLEPILEGY) is linker 1. The interval 192–283 (TSNLRKQLEM…CLYEGEIAQL (92 aa)) is coil 1B. Residues 284–307 (QSHISDTSVILSMDNNRDLDLDSI) form a linker 12 region. A coil 2 region spans residues 308–446 (IAQVRAQYEE…ATYRKLLEGE (139 aa)). The segment at 447-524 (ECRMSGEYPN…SSCATKKASR (78 aa)) is tail. Residues 495 to 524 (KTKGSCGGSELKDAPAKTSGSSCATKKASR) form a disordered region.

The protein belongs to the intermediate filament family. As to quaternary structure, heterotetramer of two type I and two type II keratins.

Has a role in hair formation. Specific component of keratin intermediate filaments in the inner root sheath (IRS) of the hair follicle. This is Keratin, type II cytoskeletal 72 (KRT72) from Bos taurus (Bovine).